Here is a 60-residue protein sequence, read N- to C-terminus: Disagregin (60 aa).

A Cell attachment site; atypical motif is present at residues 14–16; sequence RED.

As to expression, expressed in salivary glands.

Its subcellular location is the secreted. Tick salivary platelet aggregation inhibitor that plays an important part in the anti-hemostatic strategy of ticks. Inhibits fibrinogen interaction with platelets. Acts by binding (in a divalent metal ion dependent manner) to the glycoprotein IIb-IIIa receptor (ITGA2B/ITGB3) on the platelet surface and inhibits aggregation induced by ADP (IC(50)=99-104 nM), thrombin, collagen (IC(50)=64 nM) platelet-activating factor and collagen. Interacts to unstimulated platelets (Kd=42.5 nM) and to ADP-stimulated platelets (Kd=39.4 nM). In contrast to many disintegrins which only interact with the beta-3 subunit, interacts with the two subunits (alpha-IIb and beta-3). Under flow conditions, reduces and delays platelet adhesion, aggregation, and fibrin formation. This Ornithodoros moubata (Soft tick) protein is Disagregin.